The sequence spans 156 residues: 6,7-dimethyl-8-ribityllumazine synthase (156 aa).

Residues Phe22, 57-59 (AVE), and 81-83 (CVI) contribute to the 5-amino-6-(D-ribitylamino)uracil site. Residue 86–87 (GT) participates in (2S)-2-hydroxy-3-oxobutyl phosphate binding. The Proton donor role is filled by His89. Residue Phe114 coordinates 5-amino-6-(D-ribitylamino)uracil. A (2S)-2-hydroxy-3-oxobutyl phosphate-binding site is contributed by Arg128.

It belongs to the DMRL synthase family. In terms of assembly, forms an icosahedral capsid composed of 60 subunits, arranged as a dodecamer of pentamers.

It catalyses the reaction (2S)-2-hydroxy-3-oxobutyl phosphate + 5-amino-6-(D-ribitylamino)uracil = 6,7-dimethyl-8-(1-D-ribityl)lumazine + phosphate + 2 H2O + H(+). Its pathway is cofactor biosynthesis; riboflavin biosynthesis; riboflavin from 2-hydroxy-3-oxobutyl phosphate and 5-amino-6-(D-ribitylamino)uracil: step 1/2. Catalyzes the formation of 6,7-dimethyl-8-ribityllumazine by condensation of 5-amino-6-(D-ribitylamino)uracil with 3,4-dihydroxy-2-butanone 4-phosphate. This is the penultimate step in the biosynthesis of riboflavin. The chain is 6,7-dimethyl-8-ribityllumazine synthase from Vibrio cholerae serotype O1 (strain ATCC 39315 / El Tor Inaba N16961).